The sequence spans 318 residues: Acetyl-coenzyme A carboxylase carboxyl transferase subunit alpha (318 aa).

In terms of domain architecture, CoA carboxyltransferase C-terminal spans 38–292 (KLEKRLAKLE…NKTITKSLHA (255 aa)).

The protein belongs to the AccA family. As to quaternary structure, acetyl-CoA carboxylase is a heterohexamer composed of biotin carboxyl carrier protein (AccB), biotin carboxylase (AccC) and two subunits each of ACCase subunit alpha (AccA) and ACCase subunit beta (AccD).

Its subcellular location is the cytoplasm. The enzyme catalyses N(6)-carboxybiotinyl-L-lysyl-[protein] + acetyl-CoA = N(6)-biotinyl-L-lysyl-[protein] + malonyl-CoA. It participates in lipid metabolism; malonyl-CoA biosynthesis; malonyl-CoA from acetyl-CoA: step 1/1. Functionally, component of the acetyl coenzyme A carboxylase (ACC) complex. First, biotin carboxylase catalyzes the carboxylation of biotin on its carrier protein (BCCP) and then the CO(2) group is transferred by the carboxyltransferase to acetyl-CoA to form malonyl-CoA. The sequence is that of Acetyl-coenzyme A carboxylase carboxyl transferase subunit alpha from Listeria innocua serovar 6a (strain ATCC BAA-680 / CLIP 11262).